The sequence spans 289 residues: Ribosomal protein L11 methyltransferase (289 aa).

Residues Thr142, Gly163, Asp185, and Asn226 each coordinate S-adenosyl-L-methionine.

This sequence belongs to the methyltransferase superfamily. PrmA family.

It localises to the cytoplasm. The enzyme catalyses L-lysyl-[protein] + 3 S-adenosyl-L-methionine = N(6),N(6),N(6)-trimethyl-L-lysyl-[protein] + 3 S-adenosyl-L-homocysteine + 3 H(+). Its function is as follows. Methylates ribosomal protein L11. This Legionella pneumophila subsp. pneumophila (strain Philadelphia 1 / ATCC 33152 / DSM 7513) protein is Ribosomal protein L11 methyltransferase.